The primary structure comprises 595 residues: uncharacterized protein (595 aa).

3 disordered regions span residues 50–159 (VNPS…KTKK), 398–430 (TYPT…PPSL), and 450–595 (VTEG…SLDK). A compositionally biased stretch (low complexity) spans 83–122 (SNKSSALKKSNKSSNKSSNKSSNKSSNKSSNKSSNKSSNK). The segment covering 123-132 (FPDKSDKSDS) has biased composition (basic and acidic residues). Acidic residues predominate over residues 137–146 (DNSDDSDDSS). A compositionally biased stretch (low complexity) spans 398–409 (TYPTTPLFSEPT). Positions 410–420 (IPKPPQQPTTE) are enriched in pro residues. Positions 421–430 (PPSGFKPPSL) are enriched in low complexity. Residues 454–463 (KVVESDDHTS) are compositionally biased toward basic and acidic residues. Positions 467–476 (IPPPPPPPPS) are enriched in pro residues. Residues 477–529 (ISSDNSSPNKSVKSSTKSSTKSSTKSSTKSSTKSSTKSPSKTPVKSPIKSSSK) are compositionally biased toward low complexity. Residues 530-542 (LSDKKSPTKKIES) show a composition bias toward basic and acidic residues. Positions 544–553 (GESDSESDSE) are enriched in acidic residues. The segment covering 559–570 (TKKSTNKIKKIT) has biased composition (basic residues). The segment covering 571 to 580 (NNKLENSNTK) has biased composition (low complexity). Over residues 581–595 (NNKKFSKKKTISLDK) the composition is skewed to basic residues.

This is an uncharacterized protein from Acanthamoeba polyphaga mimivirus (APMV).